Here is a 366-residue protein sequence, read N- to C-terminus: RISC-loading complex subunit TARBP2 (366 aa).

Sufficient for interaction with PRKRA stretches follow at residues 22 to 105 (MLAA…EPAL), 152 to 234 (SPQQ…DARD), and 287 to 366 (LGAL…AGSK). The region spanning 30–97 (TPISLLQEYG…AEVALKHLKG (68 aa)) is the DRBM 1 domain. Ser152 is modified (phosphoserine). 2 consecutive DRBM domains span residues 159 to 227 (NPVG…RVHT) and 293 to 361 (ACCR…YLKI). The tract at residues 228–366 (VPLDARDGNE…QYLKIMAGSK (139 aa)) is sufficient for interaction with DICER1.

The protein belongs to the TARBP2 family. In terms of assembly, self-associates. Component of the RISC loading complex (RLC), or micro-RNA (miRNA) loading complex (miRLC), which is composed of DICER1, AGO2 and TARBP2. Note that the trimeric RLC/miRLC is also referred to as RISC. Interacts with EIF2AK2/PKR and inhibits its protein kinase activity. Interacts with DHX9 and PRKRA. Interacts with DICER1, AGO2, MOV10, EIF6 and RPL7A (60S ribosome subunit); they form a large RNA-induced silencing complex (RISC). Interacts with IRF7; this interaction prevents IRF7 phosphorylation and activation. As to quaternary structure, (Microbial infection) Interacts with FTSJ3; forms a complex with FTSJ3 and HIV-1 TAR RNA. (Microbial infection) Interacts with ebolavirus VP30; this interaction, which occurs only in the presence of siRNA, prevents TARBP2 binding to DICER1 and thus allows the virus to counteract host RNA silencing. In terms of assembly, (Microbial infection) Interacts with ebolavirus VP35; this interaction prevents TARBP2 binding to DICER1 and thus allows the virus to counteract host RNA silencing.

Its subcellular location is the cytoplasm. It localises to the perinuclear region. The protein localises to the nucleus. In terms of biological role, required for formation of the RNA induced silencing complex (RISC). Component of the RISC loading complex (RLC), also known as the micro-RNA (miRNA) loading complex (miRLC), which is composed of DICER1, AGO2 and TARBP2. Within the RLC/miRLC, DICER1 and TARBP2 are required to process precursor miRNAs (pre-miRNAs) to mature miRNAs and then load them onto AGO2. AGO2 bound to the mature miRNA constitutes the minimal RISC and may subsequently dissociate from DICER1 and TARBP2. May also play a role in the production of short interfering RNAs (siRNAs) from double-stranded RNA (dsRNA) by DICER1. Binds in vitro to the PRM1 3'-UTR. Seems to act as a repressor of translation. For some pre-miRNA substrates, may also alter the choice of cleavage site by DICER1. Negatively regulates IRF7-mediated IFN-beta signaling triggered by viral infection by inhibiting the phosphorylation of IRF7 and promoting its 'Lys'-48-linked ubiquitination and degradation. (Microbial infection) Binds to the HIV-1 TAR RNA which is located in the long terminal repeat (LTR) of HIV-1, and stimulates translation of TAR-containing RNAs. This is achieved in part at least by binding to and inhibiting EIF2AK2/PKR, thereby reducing phosphorylation and inhibition of EIF2S1/eIF-2-alpha. May also promote translation of TAR-containing RNAs independently of EIF2AK2/PKR. Mediates recruitment of FTSJ3 methyltransferase to HIV-1 RNA, leading to 2'-O-methylation of the viral genome, allowing HIV-1 to escape the innate immune system. The sequence is that of RISC-loading complex subunit TARBP2 from Homo sapiens (Human).